The chain runs to 148 residues: Protein Turandot Z (148 aa).

Positions 1-23 (MYFAIRLSFVLAVLFCLTGNGSA) are cleaved as a signal peptide.

This sequence belongs to the Turandot family.

The protein resides in the secreted. In terms of biological role, a humoral factor that may play a role in stress tolerance. The protein is Protein Turandot Z of Drosophila sechellia (Fruit fly).